The chain runs to 95 residues: Lipolysis-activating peptide 1-beta chain (95 aa).

A signal peptide spans 1 to 22; it reads MISVQVIFIAFISIIAFSMVCG. The 69-residue stretch at 23–91 folds into the LCN-type CS-alpha/beta domain; the sequence is GNVFPNRELG…FLNALEKQCP (69 aa). 3 cysteine pairs are disulfide-bonded: Cys-37–Cys-60, Cys-45–Cys-70, and Cys-49–Cys-72.

In terms of assembly, homodimer; disulfide-linked or monomer (edited version) or heterodimer of an alpha chain (AC P84810) and this beta chain (non-edited version). Expressed by the venom gland.

Its subcellular location is the secreted. Its function is as follows. The homodimer inhibits HMG-CoA reductase (HMGCR) (32% of inhibition produced by 0.6 uM), a glycoprotein involved in the control of cholesterol biosynthesis. The inhibitory effects of bumarsin are seen at much lower concentrations (0.6 uM) than that for statins such as atorvastatin (5 mM) and simvastatin (10 uM). In addition to inhibition of HMG-CoA reductase, this protein lowers cholesterol levels by inducing steroid hormone synthesis via StAR, and by increasing reverse cholesterol transport mediated by the induction of ABCA1 and APOA1. In terms of biological role, the heterodimer non-edited LVP1 induces lipolysis in rat adipocytes. Induction of lipolysis by LVP1 appears to be mediated through the beta-2 adrenergic receptor pathway (ADRB2). Intracerebroventricular injection is not toxic to mice. The monomer edited version, similar to alpha-toxins, may modulate voltage-gated sodium channels (Nav) and may block voltage-gated potassium channels (Kv). In Buthus occitanus tunetanus (Common European scorpion), this protein is Lipolysis-activating peptide 1-beta chain.